Reading from the N-terminus, the 379-residue chain is Homoserine O-succinyltransferase (379 aa).

Residues 51 to 360 (NAVLICHALS…DAPQGHDAFL (310 aa)) enclose the AB hydrolase-1 domain. Residue serine 157 is the Nucleophile of the active site. Arginine 227 lines the substrate pocket. Catalysis depends on residues aspartate 323 and histidine 356. Aspartate 357 provides a ligand contact to substrate.

Belongs to the AB hydrolase superfamily. MetX family. In terms of assembly, homodimer.

It localises to the cytoplasm. The enzyme catalyses L-homoserine + succinyl-CoA = O-succinyl-L-homoserine + CoA. It participates in amino-acid biosynthesis; L-methionine biosynthesis via de novo pathway; O-succinyl-L-homoserine from L-homoserine: step 1/1. Transfers a succinyl group from succinyl-CoA to L-homoserine, forming succinyl-L-homoserine. In Pseudomonas aeruginosa (strain UCBPP-PA14), this protein is Homoserine O-succinyltransferase.